The chain runs to 378 residues: Transcription initiation factor IIA subunit 1 (378 aa).

Ala-2 carries the post-translational modification N-acetylalanine. Composition is skewed to low complexity over residues 69–79, 89–106, and 247–281; these read QVQQQHQPQQQ, QQAQ…TQQV, and PAQA…TGDT. 2 disordered regions span residues 69–108 and 247–331; these read QVQQ…QVLI and PAQA…QELF. A phosphoserine; by TAF1 mark is found at Ser-282, Ser-283, Ser-318, and Ser-323. Positions 282–331 are enriched in acidic residues; the sequence is SSEEDEDEEEDYDDDEEEDKEKDGAEDGQVEEEPLNSEDDVSDEEGQELF. Residues His-345 and Arg-346 each contribute to the DNA site.

It belongs to the TFIIA subunit 1 family. TFIIA is a heterodimer of the large unprocessed subunit 1 and a small subunit gamma. It was originally believed to be a heterotrimer of an alpha (p35), a beta (p19) and a gamma subunit (p12). TFIIA forms a complex with TBP. Part of TBP-based Pol II pre-initiation complex (PIC), in which Pol II core assembles with general transcription factors and other specific initiation factors including GTF2E1, GTF2E2, GTF2F1, GTF2F2, TCEA1, ERCC2, ERCC3, GTF2H2, GTF2H3, GTF2H4, GTF2H5, GTF2A1, GTF2A2, GTF2B and TBP; this large multi-subunit PIC complex mediates DNA unwinding and targets Pol II core to the transcription start site where the first phosphodiester bond forms. The alpha and beta subunits are postranslationally produced from the precursor form by TASP1. The cleavage promotes proteasomal degradation. As to expression, expressed in pachytene spermatocytes and spermatids.

The protein resides in the nucleus. Its function is as follows. TFIIA is a component of the transcription machinery of RNA polymerase II and plays an important role in transcriptional activation. TFIIA in a complex with TBP mediates transcriptional activity. The protein is Transcription initiation factor IIA subunit 1 (Gtf2a1) of Mus musculus (Mouse).